Consider the following 250-residue polypeptide: uncharacterized protein (250 aa).

The segment at 182–205 is disordered; that stretch reads HTPIVSIQTPPPPAPTPNRPDVPA. Residues 190–201 show a composition bias toward pro residues; sequence TPPPPAPTPNRP. The helical transmembrane segment at 230–250 threads the bilayer; the sequence is TRISVIPLLSVLLLVIIIILL.

The protein belongs to the ascovirus HvAV ORF18 family.

The protein resides in the membrane. This is an uncharacterized protein from Spodoptera frugiperda ascovirus 1a (SfAV-1a).